Consider the following 300-residue polypeptide: Tetrahydromethanopterin S-methyltransferase subunit E (300 aa).

Helical transmembrane passes span 62-82, 86-106, 135-155, 158-178, 226-246, and 261-281; these read PVSYGLYVAAAGATAWALMGM, PILAIIVGSAVAALVHGAYSV, PIVGHGFIAVFCMLFAAYLAV, LGNPFPLPLVALIFGITVGAI, YFCSKLGGPLTGLAFGLIIFL, and LITKAAIAIVVGLIVVITTLL.

The protein belongs to the MtrE family. The complex is composed of 8 subunits; MtrA, MtrB, MtrC, MtrD, MtrE, MtrF, MtrG and MtrH.

The protein localises to the cell membrane. It carries out the reaction 5-methyl-5,6,7,8-tetrahydromethanopterin + coenzyme M + 2 Na(+)(in) = 5,6,7,8-tetrahydromethanopterin + methyl-coenzyme M + 2 Na(+)(out). It functions in the pathway one-carbon metabolism; methanogenesis from CO(2); methyl-coenzyme M from 5,10-methylene-5,6,7,8-tetrahydromethanopterin: step 2/2. Functionally, part of a complex that catalyzes the formation of methyl-coenzyme M and tetrahydromethanopterin from coenzyme M and methyl-tetrahydromethanopterin. This is an energy-conserving, sodium-ion translocating step. The chain is Tetrahydromethanopterin S-methyltransferase subunit E from Methanococcus aeolicus (strain ATCC BAA-1280 / DSM 17508 / OCM 812 / Nankai-3).